Reading from the N-terminus, the 507-residue chain is Solute carrier family 2, facilitated glucose transporter member 6 (507 aa).

Positions 1–28 (MQEPLLGAEGPDYDTFPEKPPPSPGDRA) are disordered. The Cytoplasmic portion of the chain corresponds to 1 to 37 (MQEPLLGAEGPDYDTFPEKPPPSPGDRARVGTLQNKR). A Dileucine internalization motif motif is present at residues 5–6 (LL). At serine 23 the chain carries Phosphoserine. The helical transmembrane segment at 38 to 58 (VFLATFAAVLGNFSFGYALVY) threads the bilayer. At 59-81 (TSPVIPALERSLDPDLHLTKSQA) the chain is on the extracellular side. A helical membrane pass occupies residues 82 to 102 (SWFGSVFTLGAAAGGLSAMIL). Residues 103–111 (NDLLGRKLS) lie on the Cytoplasmic side of the membrane. Residues 112–132 (IMFSAVPSAAGYALMAGAHGL) form a helical membrane-spanning segment. The Extracellular segment spans residues 133–140 (WMLLLGRT). A helical membrane pass occupies residues 141–161 (LTGFAGGLTAACIPVYVSEIA). Topologically, residues 162 to 168 (PPGVRGA) are cytoplasmic. A helical membrane pass occupies residues 169–189 (LGATPQLMAVFGSLSLYALGL). Glutamine 174 is an a D-hexose binding site. Topologically, residues 190–194 (LLPWR) are extracellular. Residues 195 to 215 (WLAVAGEAPVLIMILLLSFMP) traverse the membrane as a helical segment. Residues 216 to 289 (NSPRFLLSRG…LLMRLLQQLT (74 aa)) are Cytoplasmic-facing. 286–287 (QQ) lines the a D-hexose pocket. A helical membrane pass occupies residues 290-310 (GITPILVYLQSIFDSTAVLLP). Residues 311–314 (PKDD) lie on the Extracellular side of the membrane. A helical membrane pass occupies residues 315-335 (AAIVGAVRLLSVLIAALTMDL). The Cytoplasmic segment spans residues 336-339 (AGRK). A helical membrane pass occupies residues 340–360 (VLLFVSAAIMFAANLTLGLYI). Residues 361-395 (HFGPRPLSPNSTAGLESESWGDLAQPLAAPAGYLT) are Extracellular-facing. Asparagine 370 carries N-linked (GlcNAc...) asparagine glycosylation. Residues 396–416 (LVPLLATMLFIMGYAVGWGPI) form a helical membrane-spanning segment. The Cytoplasmic portion of the chain corresponds to 417–435 (TWLLMSEVLPLRARGVASG). Tryptophan 418 lines the a D-hexose pocket. The chain crosses the membrane as a helical span at residues 436–456 (LCVLASWLTAFVLTKSFLPVV). Topologically, residues 457–462 (STFGLQ) are extracellular. A helical membrane pass occupies residues 463 to 483 (VPFFFFAAICLVSLVFTGCCV). Topologically, residues 484-507 (PETKGRSLEQIESFFRTGRRSFLR) are cytoplasmic.

This sequence belongs to the major facilitator superfamily. Sugar transporter (TC 2.A.1.1) family. Glucose transporter subfamily. As to expression, highly expressed in brain, spleen and peripheral blood leukocytes.

The protein localises to the lysosome membrane. In terms of biological role, probable sugar transporter that acts as a regulator of glycolysis in macrophages. Does not transport glucose. This chain is Solute carrier family 2, facilitated glucose transporter member 6, found in Homo sapiens (Human).